The following is a 317-amino-acid chain: Exopolysaccharide production protein ExoZ (317 aa).

7 consecutive transmembrane segments (helical) span residues 14–34 (TIGA…MWVI), 53–73 (IVPV…AGLF), 100–120 (IWPV…YAVF), 132–152 (LPVV…VAFD), 185–205 (LAVG…IGVL), 206–226 (GLPF…IGVL), and 268–288 (IGLG…LIGI).

The protein belongs to the acyltransferase 3 family.

It is found in the cell membrane. Required for the acetyl modification of the third sugar (glucose) of the octasaccharide subunit of succinoglycan (EPS I). This is Exopolysaccharide production protein ExoZ (exoZ) from Rhizobium meliloti (strain 1021) (Ensifer meliloti).